Here is a 381-residue protein sequence, read N- to C-terminus: Probable serine/threonine-protein kinase PBL22 (381 aa).

Residue cysteine 3 is the site of S-palmitoyl cysteine attachment. The residue at position 64 (threonine 64) is a Phosphothreonine. Positions 75-351 (FREGNIIGKG…GDVVVAFEYI (277 aa)) constitute a Protein kinase domain. ATP contacts are provided by residues 81 to 89 (IGKGGFGSV) and lysine 103. Tyrosine 148 bears the Phosphotyrosine mark. Aspartate 201 serves as the catalytic Proton acceptor. The residue at position 235 (serine 235) is a Phosphoserine. 2 positions are modified to phosphothreonine: threonine 236 and threonine 241. Tyrosine 249 bears the Phosphotyrosine mark. The disordered stretch occupies residues 361-381 (RRTARKSTDSNRLRRETKQSY).

Belongs to the protein kinase superfamily. Ser/Thr protein kinase family. Palmitoylation at Cys-3 and Cys-6 are required for plasma membrane location.

The protein localises to the cell membrane. It catalyses the reaction L-seryl-[protein] + ATP = O-phospho-L-seryl-[protein] + ADP + H(+). The catalysed reaction is L-threonyl-[protein] + ATP = O-phospho-L-threonyl-[protein] + ADP + H(+). May be involved in plant defense signaling. This chain is Probable serine/threonine-protein kinase PBL22, found in Arabidopsis thaliana (Mouse-ear cress).